Consider the following 282-residue polypeptide: Chorismate dehydratase (282 aa).

Belongs to the MqnA/MqnD family. MqnA subfamily.

It carries out the reaction chorismate = 3-[(1-carboxyvinyl)-oxy]benzoate + H2O. It functions in the pathway quinol/quinone metabolism; menaquinone biosynthesis. Catalyzes the dehydration of chorismate into 3-[(1-carboxyvinyl)oxy]benzoate, a step in the biosynthesis of menaquinone (MK, vitamin K2). In Streptomyces coelicolor (strain ATCC BAA-471 / A3(2) / M145), this protein is Chorismate dehydratase.